Reading from the N-terminus, the 130-residue chain is Small ribosomal subunit protein uS8A (130 aa).

It belongs to the universal ribosomal protein uS8 family.

This is Small ribosomal subunit protein uS8A (RpS15Aa) from Drosophila melanogaster (Fruit fly).